A 382-amino-acid polypeptide reads, in one-letter code: Queuine tRNA-ribosyltransferase (382 aa).

The active-site Proton acceptor is the D96. Residues D96–F100, D151, Q194, and G221 each bind substrate. An RNA binding region spans residues G252 to S258. D271 acts as the Nucleophile in catalysis. The segment at T276–R280 is RNA binding; important for wobble base 34 recognition. Zn(2+) is bound by residues C309, C311, C314, and H340.

It belongs to the queuine tRNA-ribosyltransferase family. As to quaternary structure, homodimer. Within each dimer, one monomer is responsible for RNA recognition and catalysis, while the other monomer binds to the replacement base PreQ1. It depends on Zn(2+) as a cofactor.

The catalysed reaction is 7-aminomethyl-7-carbaguanine + guanosine(34) in tRNA = 7-aminomethyl-7-carbaguanosine(34) in tRNA + guanine. The protein operates within tRNA modification; tRNA-queuosine biosynthesis. Catalyzes the base-exchange of a guanine (G) residue with the queuine precursor 7-aminomethyl-7-deazaguanine (PreQ1) at position 34 (anticodon wobble position) in tRNAs with GU(N) anticodons (tRNA-Asp, -Asn, -His and -Tyr). Catalysis occurs through a double-displacement mechanism. The nucleophile active site attacks the C1' of nucleotide 34 to detach the guanine base from the RNA, forming a covalent enzyme-RNA intermediate. The proton acceptor active site deprotonates the incoming PreQ1, allowing a nucleophilic attack on the C1' of the ribose to form the product. After dissociation, two additional enzymatic reactions on the tRNA convert PreQ1 to queuine (Q), resulting in the hypermodified nucleoside queuosine (7-(((4,5-cis-dihydroxy-2-cyclopenten-1-yl)amino)methyl)-7-deazaguanosine). The polypeptide is Queuine tRNA-ribosyltransferase (Lactococcus lactis subsp. cremoris (strain SK11)).